Consider the following 103-residue polypeptide: Small ribosomal subunit protein uS10 (103 aa).

It belongs to the universal ribosomal protein uS10 family. In terms of assembly, part of the 30S ribosomal subunit.

Functionally, involved in the binding of tRNA to the ribosomes. The protein is Small ribosomal subunit protein uS10 of Bordetella avium (strain 197N).